Consider the following 390-residue polypeptide: Transposase for insertion sequence element IS21 (390 aa).

An HTH IS21-type domain is found at 5-66 (EDFYMIKQMR…PFMDYIDMRL (62 aa)). Positions 20–39 (IVDIATQIGCSERTVRRYLK) form a DNA-binding region, H-T-H motif. The 175-residue stretch at 111 to 285 (FETQPRYQLQ…TPEQRFALEQ (175 aa)) folds into the Integrase catalytic domain.

The protein belongs to the transposase IS21/IS408/IS1162 family.

Functionally, involved in the transposition of the insertion sequence. This is Transposase for insertion sequence element IS21 (istA) from Pseudomonas aeruginosa.